The chain runs to 1021 residues: Collagenase ColH (1021 aa).

A signal peptide spans 1–30 (MKRKCLSKRLMLAITMATIFTVNSTLPIYA). The propeptide occupies 31 to 40 (AVDKNNATAA). The segment at 41 to 320 (VQNESKRYTV…SADQIKRHYD (280 aa)) is activator domain. The S1 metalloprotease domain stretch occupies residues 41-717 (VQNESKRYTV…TYDVVFHGYL (677 aa)). Positions 330–601 (PLDKFKKEGK…MQERIDNYEN (272 aa)) are catalytic subdomain. A Zn(2+)-binding site is contributed by D421. E430 provides a ligand contact to Ca(2+). H455 is a Zn(2+) binding site. E456 is an active-site residue. Zn(2+) is bound at residue H459. Positions 463, 467, and 469 each coordinate Ca(2+). E487 provides a ligand contact to Zn(2+). The helper subdomain stretch occupies residues 609-721 (DDYLVRHAYK…VFHGYLPNEG (113 aa)). The tract at residues 718 to 810 (PNEGDSKNSL…VSTTTAEIKD (93 aa)) is S2a domain. Ca(2+)-binding residues include N725, S726, D753, D755, D794, N814, K815, D842, D844, D884, E908, E910, N912, N913, T931, D937, Q938, and D939. The PKD 1 domain occupies 727–808 (LPYGKINGTY…SSVSTTTAEI (82 aa)). Residues 811–904 (LSENKLPVIY…KIKITDPVYP (94 aa)) are S2b domain. Residues 816 to 905 (LPVIYMHVPK…IKITDPVYPI (90 aa)) form the PKD 2 domain. The interval 903 to 922 (YPIGTEKEPNNSKETASGPI) is disordered. Positions 905–1021 (IGTEKEPNNS…RINIEGSVGR (117 aa)) are S3 collagen-binding domain. Positions 1002-1004 (YMF) are collagen-binding.

This sequence belongs to the peptidase M9B family. Collagenase subfamily. Ca(2+) serves as cofactor. Requires Zn(2+) as cofactor. Upon purification gives rise to 98 kDa, 105 kDa and 116 kDa (full-length) proteins, all of which have the same N-terminus.

The protein resides in the secreted. The enzyme catalyses Digestion of native collagen in the triple helical region at Xaa-|-Gly bonds. With synthetic peptides, a preference is shown for Gly at P3 and P1', Pro and Ala at P2 and P2', and hydroxyproline, Ala or Arg at P3'.. With respect to regulation, inhibited by EDTA. Inhibited by 1-10-phenanthroline. Inhibited by broad-spectrum zinc metalloprotease inhibitor batimastat. N-aryl mercaptoacetamide-based inhibitors have been isolated that act on clostridial collagenases with submicromolar affinity while having negligibile activity on human collagenases. Clostridial collagenases are among the most efficient degraders of eukaryotic collagen known; saprophytes use collagen as a carbon source while pathogens additionally digest collagen to aid in host colonization. Has both tripeptidylcarboxypeptidase on Gly-X-Y and endopeptidase activities; the endopeptidase cuts within the triple helix region of collagen while tripeptidylcarboxypeptidase successively digests the exposed ends, thus clostridial collagenases can digest large sections of collagen. The full-length protein has collagenase activity, while both the 116 kDa and 98 kDa forms act on gelatin. In vitro digestion of soluble calf skin collagen fibrils requires both ColG and ColH; ColG forms missing the second collagen-binding domain is also synergistic with ColH, although their overall efficiency is decreased. Digestion of collagen requires Ca(2+) and is inhibited by EDTA. The activator domain (residues 119-388) and catalytic subdomain (330-601) open and close around substrate allowing digestion when the protein is closed. The polypeptide is Collagenase ColH (Hathewaya histolytica (Clostridium histolyticum)).